A 133-amino-acid chain; its full sequence is Cytochrome c-554 (133 aa).

Glutamine 1 bears the Pyrrolidone carboxylic acid mark. Heme c contacts are provided by methionine 17, cysteine 122, cysteine 125, and histidine 126.

Binds 1 heme c group covalently per subunit.

It is found in the periplasm. Functionally, monoheme c-type cytochrome, that is particularly expressed when cells generate energy via aerobic respiration. The sequence is that of Cytochrome c-554 (cycF) from Cereibacter sphaeroides (Rhodobacter sphaeroides).